The sequence spans 183 residues: Efficient mitochondria targeting-associated protein 19 (183 aa).

Residues 1-25 lie on the Cytoplasmic side of the membrane; sequence MKVVSLRRIYSSEIYKLPTTRLHMD. The EXPERA domain maps to 24 to 156; sequence MDTLYYYYFV…PYLAIPLWMA (133 aa). The helical transmembrane segment at 26–46 threads the bilayer; that stretch reads TLYYYYFVSHLAAALFVDLPI. The Lumenal segment spans residues 47-81; the sequence is TEWLGGSLSCLSGLRRFYLSTYEDPILLIPAPWKT. The helical transmembrane segment at 82–102 threads the bilayer; that stretch reads ALFSSELFFQVPFFIWVSLRL. Residues 103–110 lie on the Cytoplasmic side of the membrane; sequence RKKARDPV. Residues 111-131 traverse the membrane as a helical segment; it reads LWVAILIYGVHAFTTTWCCMF. Residues 132-138 are Lumenal-facing; it reads ELFAEKK. Residues 139 to 159 traverse the membrane as a helical segment; it reads WMIMSFYFPYLAIPLWMAIDM. The Cytoplasmic segment spans residues 160-183; sequence GGRLVKSCHAAKSGPSSTITSKSD.

This sequence belongs to the TMEM97/sigma-2 receptor family.

The protein localises to the endoplasmic reticulum membrane. In terms of biological role, part of an import route for newly synthesized mitochondrial proteins termed the ER-SURF pathway (ER surface-mediated protein targeting), which retrieves mitochondrial precursor proteins from the ER surface and reroutes them to mitochondria for efficient mitochondrial import. Acts as a quality control factor in the ER, promoting the proteolytic degradation of nonproductive and extramitochondrial precursor proteins in the ER membrane thus removing them from the ER surface. The chain is Efficient mitochondria targeting-associated protein 19 (ema19) from Schizosaccharomyces pombe (strain 972 / ATCC 24843) (Fission yeast).